The primary structure comprises 258 residues: Trans-aconitate 2-methyltransferase (258 aa).

Belongs to the methyltransferase superfamily. Tam family.

The protein resides in the cytoplasm. The enzyme catalyses trans-aconitate + S-adenosyl-L-methionine = (E)-3-(methoxycarbonyl)pent-2-enedioate + S-adenosyl-L-homocysteine. Catalyzes the S-adenosylmethionine monomethyl esterification of trans-aconitate. The polypeptide is Trans-aconitate 2-methyltransferase (Deinococcus radiodurans (strain ATCC 13939 / DSM 20539 / JCM 16871 / CCUG 27074 / LMG 4051 / NBRC 15346 / NCIMB 9279 / VKM B-1422 / R1)).